Consider the following 115-residue polypeptide: Large ribosomal subunit protein bL19 (115 aa).

This sequence belongs to the bacterial ribosomal protein bL19 family.

In terms of biological role, this protein is located at the 30S-50S ribosomal subunit interface and may play a role in the structure and function of the aminoacyl-tRNA binding site. This is Large ribosomal subunit protein bL19 from Tropheryma whipplei (strain TW08/27) (Whipple's bacillus).